We begin with the raw amino-acid sequence, 328 residues long: Mitochondrial thiamine pyrophosphate carrier 1 (328 aa).

Solcar repeat units follow at residues 12–110 (GTRR…TTQL), 120–208 (PQPI…LRPV), and 221–316 (PPGS…ALKL). The next 6 helical transmembrane spans lie at 17 to 37 (VVLA…PLDV), 79 to 99 (LTGL…YGGI), 126 to 146 (FISG…LDLL), 185 to 205 (SAAV…YEAL), 227 to 247 (AAAG…LDLV), and 291 to 308 (GLTV…VTMW).

Belongs to the mitochondrial carrier (TC 2.A.29) family.

It is found in the mitochondrion inner membrane. In terms of biological role, mitochondrial transporter that mediates uptake of thiamine pyrophosphate (ThPP) into mitochondria. The protein is Mitochondrial thiamine pyrophosphate carrier 1 (tpc1) of Emericella nidulans (strain FGSC A4 / ATCC 38163 / CBS 112.46 / NRRL 194 / M139) (Aspergillus nidulans).